The following is a 489-amino-acid chain: L-arabinose isomerase (489 aa).

Mn(2+) contacts are provided by glutamate 300, glutamate 325, histidine 342, and histidine 441.

It belongs to the arabinose isomerase family. The cofactor is Mn(2+).

The catalysed reaction is beta-L-arabinopyranose = L-ribulose. Its pathway is carbohydrate degradation; L-arabinose degradation via L-ribulose; D-xylulose 5-phosphate from L-arabinose (bacterial route): step 1/3. Catalyzes the conversion of L-arabinose to L-ribulose. The polypeptide is L-arabinose isomerase (Clostridium beijerinckii (strain ATCC 51743 / NCIMB 8052) (Clostridium acetobutylicum)).